Reading from the N-terminus, the 81-residue chain is Accessory gland protein Acp63F (81 aa).

Positions Met1–Ala16 are cleaved as a signal peptide.

As to expression, main cells of accessory gland and seminal fluid.

It is found in the secreted. Functionally, responsible for physiological and behavioral changes in mated female flies. The protein is Accessory gland protein Acp63F (Acp63F) of Drosophila melanogaster (Fruit fly).